A 241-amino-acid polypeptide reads, in one-letter code: Peptidoglycan endopeptidase RipB (241 aa).

The N-terminal stretch at 1–31 (MRHTRFHPIKLAWITAVVAGLMVGVATPADA) is a signal peptide. Positions 109–241 (RQAVEYVIRR…TPFVTRIIEY (133 aa)) constitute a NlpC/P60 domain. The active-site Nucleophile is the Cys-152. His-201 (proton acceptor) is an active-site residue. Residue Glu-213 is part of the active site.

It belongs to the peptidase C40 family. Monomer.

Functionally, peptidoglycan endopeptidase that cleaves the bond between D-glutamate and meso-diaminopimelate. Binds high-molecular weight peptidoglycan, but does not degrade it. Required for normal separation of daughter cells after cell division and cell wall integrity. Required for host cell invasion. This is Peptidoglycan endopeptidase RipB (ripB) from Mycobacterium tuberculosis (strain CDC 1551 / Oshkosh).